The chain runs to 1598 residues: Serine/threonine-protein kinase Nek1 (1598 aa).

In terms of domain architecture, Protein kinase spans 106 to 380 (YEVIRQIGAG…ALQCLGYTIF (275 aa)). ATP contacts are provided by residues 112-120 (IGAGRFGEV) and Lys-135. Asp-240 functions as the Proton acceptor in the catalytic mechanism.

It belongs to the protein kinase superfamily. NEK Ser/Thr protein kinase family. NIMA subfamily.

It is found in the cytoplasm. It localises to the cytoskeleton. Its subcellular location is the microtubule organizing center. The protein resides in the centrosome. The protein localises to the spindle pole. The enzyme catalyses L-seryl-[protein] + ATP = O-phospho-L-seryl-[protein] + ADP + H(+). It carries out the reaction L-threonyl-[protein] + ATP = O-phospho-L-threonyl-[protein] + ADP + H(+). With respect to regulation, phosphorylation status of the T-loop (amino acids 267-293) modulates kinase activity and subcellular localization of the protein. Its function is as follows. Probable serine/threonine-protein kinase. Involved in controlling centrosome splitting. Promotes separation of the centrosome outer cores. This chain is Serine/threonine-protein kinase Nek1, found in Toxoplasma gondii (strain ATCC 50611 / Me49).